The following is a 908-amino-acid chain: Vacuolar membrane protease (908 aa).

A disordered region spans residues 1–25 (MTSGEEEEGTREQVPVSQPTGTTSI). Residues 1–48 (MTSGEEEEGTREQVPVSQPTGTTSIVSTKEKQPNIFIRAIRATFGYRK) are Cytoplasmic-facing. The segment covering 15–25 (PVSQPTGTTSI) has biased composition (polar residues). A helical membrane pass occupies residues 49 to 69 (TSLTLFVLLTIFFTVAFSSYD). Topologically, residues 70 to 381 (NSLDFTIDLP…FSTSVTTLNT (312 aa)) are vacuolar. 2 N-linked (GlcNAc...) asparagine glycosylation sites follow: N143 and N162. Zn(2+) is bound by residues H176 and D188. E221 functions as the Proton acceptor in the catalytic mechanism. Zn(2+) contacts are provided by E222, E247, and H319. A glycan (N-linked (GlcNAc...) asparagine) is linked at N354. A helical transmembrane segment spans residues 382–402 (INMVLIVLFPVLSGPLLFITV). Over 403–411 (RYKKWNIGT) the chain is Cytoplasmic. A helical transmembrane segment spans residues 412-432 (ANLFSLPLAIVITSLVGAVVV). At 433–449 (NQGFRLVNEFLPASRPM) the chain is on the vacuolar side. The helical transmembrane segment at 450–470 (LLVTTTTSILLLTYYILLNGI) threads the bilayer. The Cytoplasmic portion of the chain corresponds to 471 to 480 (NFVSPSGDQK). The helical transmembrane segment at 481–501 (LVSIIQISFIYWIALIFVTRG) threads the bilayer. Over 502–514 (LSQNAIGDDHTGE) the chain is Vacuolar. The helical transmembrane segment at 515 to 535 (FAFTILFLLEATASLFGLIGW) threads the bilayer. Over 536–602 (TFTRSVKEPT…MQHFGYDWSL (67 aa)) the chain is Cytoplasmic. Positions 543–584 (EPTGDEEPLLNGRMERYVDGSDDEDDVEEEDDEDQSEEENHQ) are disordered. Residues 562–579 (GSDDEDDVEEEDDEDQSE) are compositionally biased toward acidic residues. The chain crosses the membrane as a helical span at residues 603–623 (QFLLIVPISSLVIYNSGWLVI). Residues 624-638 (DGINKSIQESLVAEN) are Vacuolar-facing. N627 carries an N-linked (GlcNAc...) asparagine glycan. Residues 639–659 (FIYLIIQLFSQFWILPILPFV) traverse the membrane as a helical segment. Residues 660–664 (YKLNR) are Cytoplasmic-facing. The helical transmembrane segment at 665-685 (FMVLGLIAFALVGVTLISSVD) threads the bilayer. The Vacuolar segment spans residues 686–908 (PFNQDNPLKL…LVSLTNRIEV (223 aa)). 2 N-linked (GlcNAc...) asparagine glycosylation sites follow: N752 and N764.

The protein belongs to the peptidase M28 family. Zn(2+) is required as a cofactor.

It localises to the vacuole membrane. May be involved in vacuolar sorting and osmoregulation. The protein is Vacuolar membrane protease of Candida tropicalis (strain ATCC MYA-3404 / T1) (Yeast).